Here is an 867-residue protein sequence, read N- to C-terminus: Putative tyrosine-protein kinase F09A5.2 (867 aa).

A run of 2 helical transmembrane segments spans residues 45-65 (VMKI…FATS) and 355-375 (LLLI…AFFV). N395 and N423 each carry an N-linked (GlcNAc...) asparagine glycan. In terms of domain architecture, Protein kinase spans 467–757 (VQEDHLLGNG…FNEMRGEITV (291 aa)). 473-481 (LGNGAFANV) contributes to the ATP binding site. 2 N-linked (GlcNAc...) asparagine glycosylation sites follow: N496 and N500. K516 lines the ATP pocket. N-linked (GlcNAc...) asparagine glycosylation occurs at N585. D626 functions as the Proton acceptor in the catalytic mechanism. Disordered regions lie at residues 782 to 821 (LTMQ…GTCA) and 848 to 867 (SKSM…TYQS). Residues 801–810 (DMDEDGDYDS) are compositionally biased toward acidic residues. Positions 858–867 (SNSTVSTYQS) are enriched in polar residues. N859 is a glycosylation site (N-linked (GlcNAc...) asparagine).

Belongs to the protein kinase superfamily. Tyr protein kinase family.

It localises to the membrane. The catalysed reaction is L-tyrosyl-[protein] + ATP = O-phospho-L-tyrosyl-[protein] + ADP + H(+). This is Putative tyrosine-protein kinase F09A5.2 from Caenorhabditis elegans.